The sequence spans 873 residues: Zinc fingers and homeoboxes protein 1 (873 aa).

Residues 24-63 (LISDLDEGPPVLTPVENTRAESISSDEEVHESVDSDNQQN) form a disordered region. Position 36 is a phosphothreonine (Thr-36). Ser-45, Ser-47, and Ser-48 each carry phosphoserine. 2 C2H2-type zinc fingers span residues 70–93 (YECKYCTFQTPDLNMFTFHVDSEH) and 102–125 (YVCVECNFLTKRYDALSEHNLKYH). Lys-159 is covalently cross-linked (Glycyl lysine isopeptide (Lys-Gly) (interchain with G-Cter in SUMO2)). A disordered region spans residues 198-236 (VHHNSVEDVPEEKENEIKPDREETVENPSSSASESNTST). A Phosphoserine modification is found at Ser-202. Residues 212-221 (NEIKPDREET) are compositionally biased toward basic and acidic residues. A compositionally biased stretch (low complexity) spans 223 to 236 (ENPSSSASESNTST). The tract at residues 272-432 (NSNLIPKVLI…QNNVQKSQVP (161 aa)) is required for dimerization. Positions 272–564 (NSNLIPKVLI…VQPKQSWNPF (293 aa)) are required for interaction with NFYA. A DNA-binding region (homeobox 1) is located at residues 284–346 (NSIPTYNAAL…LKHGVSWTPE (63 aa)). The segment at 431–454 (VPAAQPTAETKPATAAVPTSQSVK) is disordered. Glycyl lysine isopeptide (Lys-Gly) (interchain with G-Cter in SUMO2) cross-links involve residues Lys-441, Lys-454, and Lys-485. The homeobox 2 DNA-binding region spans 464–526 (SFGIRAKKTK…YNQRNSKSNQ (63 aa)). 3 disordered regions span residues 544 to 563 (DETTESPTVGTVQPKQSWNP), 626 to 668 (KEEK…CKKT), and 732 to 769 (SSMNGLSSLRKRGRGRPKGRGRGRPRGRPRGSKRINNW). The span at 550 to 562 (PTVGTVQPKQSWN) shows a compositional bias: polar residues. Positions 569–630 (PQKFKEKTAE…KSKALKEEKM (62 aa)) form a DNA-binding region, homeobox 3. Residue Lys-629 forms a Glycyl lysine isopeptide (Lys-Gly) (interchain with G-Cter in SUMO2) linkage. At Ser-648 the chain carries Phosphoserine. The homeobox 4 DNA-binding region spans 660 to 722 (STGKICKKTP…YAWKNGNLKW (63 aa)). A required for nuclear localization region spans residues 734 to 768 (MNGLSSLRKRGRGRPKGRGRGRPRGRPRGSKRINN). Residues 740 to 764 (LRKRGRGRPKGRGRGRPRGRPRGSK) are compositionally biased toward basic residues. Ser-774 carries the phosphoserine modification. A DNA-binding region (homeobox 5) is located at residues 777–832 (KFKTGTAILKDYYLKHKFLNEQDLDELVNKSHMGYEQVREWFAERQRRSELGIELF). Residues 829–873 (IELFEENEEEDEVIDDQEEDEEETDDSDTWEPPRHVKRKLSKSDD) form a disordered region. Acidic residues predominate over residues 831-857 (LFEENEEEDEVIDDQEEDEEETDDSDT). The interval 831-873 (LFEENEEEDEVIDDQEEDEEETDDSDTWEPPRHVKRKLSKSDD) is required for repressor activity. A compositionally biased stretch (basic residues) spans 863–873 (HVKRKLSKSDD).

It belongs to the ZHX family. Forms homodimers. Heterodimer (via HD1 domain) with ZHX2 (via HD1 domain). Also forms a heterodimer with ZHX3 which is a prerequisite for repressor activity. Interacts with ATF7IP and NFYA. Interacts (via homeobox domains) with DNMT3B (via PWWP domain).

The protein localises to the nucleus. Its function is as follows. Acts as a transcriptional repressor. Increases DNMT3B-mediated repressive transcriptional activity when DNMT3B is tethered to DNA. May link molecule between DNMT3B and other co-repressor proteins. This is Zinc fingers and homeoboxes protein 1 (ZHX1) from Pongo pygmaeus (Bornean orangutan).